A 473-amino-acid polypeptide reads, in one-letter code: Endoglucanase B (473 aa).

Positions 1–17 (MKFLNTFSLLSLAIIGS) are cleaved as a signal peptide. Residues 18–367 (KAMKNISSKE…GLIKGLGNSI (350 aa)) are catalytic. Catalysis depends on E173, which acts as the Proton donor. Catalysis depends on E295, which acts as the Nucleophile. The linker stretch occupies residues 365 to 387 (NSIKTRTTIRRTTTTTTSQSQPT). 2 consecutive CBM10 domains span residues 391 to 427 (SCFSVNLGYSCCNGCEVEYTDSDGEWGVENGNWCGIK) and 436 to 473 (ICWSEKLGYPCCQNTSSVVYTDNDGKWGVENGNWCGIY).

The protein belongs to the glycosyl hydrolase 5 (cellulase A) family.

The enzyme catalyses Endohydrolysis of (1-&gt;4)-beta-D-glucosidic linkages in cellulose, lichenin and cereal beta-D-glucans.. Functionally, rate of hydrolysis of cellulo-oligosaccharides increased with increasing chain length from cellotriose to cellopentaose. The chain is Endoglucanase B (CELB) from Neocallimastix patriciarum (Rumen fungus).